Here is a 364-residue protein sequence, read N- to C-terminus: Protein LATERAL BRANCHING OXIDOREDUCTASE 1 (364 aa).

A Fe2OG dioxygenase domain is found at 203–312 (RFEEMFGEAV…RLTIVTFYAP (110 aa)). Residues histidine 235, aspartate 237, and histidine 293 each contribute to the Fe cation site. Arginine 303 contributes to the 2-oxoglutarate binding site.

Belongs to the iron/ascorbate-dependent oxidoreductase family. Monomer. The cofactor is Fe(2+). L-ascorbate serves as cofactor. As to expression, expressed in the vasculature throughout the plant and in the buds and root tips.

Its subcellular location is the cytoplasm. It catalyses the reaction (11R)-methyl carlactonoate + 2-oxoglutarate + O2 = (11R)-hydroxymethyl carlactonoate + succinate + CO2. Functionally, oxoglutarate-dependent dioxygenase involved in the biosynthesis of strigolactone natural products, bioactive compounds promoting plant fitness and soil microbe interactions, but preventing shoot branching. Catalyzes the hydroxylation of (11R)-methyl carlactonoate (MeCLA) to produce (11R)-hydroxymethyl carlactonoate (1'-HO-MeCLA) in final stages of strigolactone biosynthesis, downstream of MAX1 and CLAMT. The protein is Protein LATERAL BRANCHING OXIDOREDUCTASE 1 of Arabidopsis thaliana (Mouse-ear cress).